Here is a 268-residue protein sequence, read N- to C-terminus: MSRFETQFATLNAKNEGAFVPFVTLCDPTFDRSFEIICTLVDNGADALELGFPFSDPLLDGPVIQAANNRALTAGHSSEDSLKLLEKVRSKYPEIPISLLLCANLIFAKGLDAFYQRCAEVGVDAVLVADIPLLAKGDYVQTAKKHGIQPVFICPPNADEKTIQGVAKNSEGYTYLVSRAGVTSAENQAHAANLDTLVEKLKAHNAPPILQGFGIAQPEQVKEALSLGTAGAISGSATVKIIERNLDNHEQCLAELAEFVQTMKAATK.

Residues Glu49 and Asp60 each act as proton acceptor in the active site.

This sequence belongs to the TrpA family. In terms of assembly, tetramer of two alpha and two beta chains.

The catalysed reaction is (1S,2R)-1-C-(indol-3-yl)glycerol 3-phosphate + L-serine = D-glyceraldehyde 3-phosphate + L-tryptophan + H2O. The protein operates within amino-acid biosynthesis; L-tryptophan biosynthesis; L-tryptophan from chorismate: step 5/5. Functionally, the alpha subunit is responsible for the aldol cleavage of indoleglycerol phosphate to indole and glyceraldehyde 3-phosphate. This is Tryptophan synthase alpha chain from Haemophilus influenzae (strain ATCC 51907 / DSM 11121 / KW20 / Rd).